The chain runs to 771 residues: Kinase suppressor of Ras A (771 aa).

Over residues 152–169 the composition is skewed to polar residues; that stretch reads SRTSSGSTDEPSGQSTPA. Residues 152–172 are disordered; sequence SRTSSGSTDEPSGQSTPAIVT. The segment at 215–269 adopts a Phorbol-ester/DAG-type zinc-finger fold; that stretch reads PHKWHRSTKFRFSGDAVCHFCQRPLGFGFLNAWEKCRSCKWKVHTQCKGRVGDSC. 2 disordered regions span residues 290-339 and 414-433; these read GMWK…ISGN and DSTGSQEVDSEAAPSQEAVD. Low complexity predominate over residues 318–331; it reads SSSSTNSSAPSTPA. A Protein kinase domain is found at 477 to 748; it reads DKQAPIIGRG…TDINLKLTAL (272 aa). ATP is bound by residues 483-491 and K503; that span reads IGRGRFGKV. Residue D600 is the Proton acceptor of the active site.

The protein belongs to the protein kinase superfamily. TKL Ser/Thr protein kinase family. As to quaternary structure, interacts with mek-2. Requires Mg(2+) as cofactor.

It carries out the reaction L-seryl-[protein] + ATP = O-phospho-L-seryl-[protein] + ADP + H(+). It catalyses the reaction L-threonyl-[protein] + ATP = O-phospho-L-threonyl-[protein] + ADP + H(+). Serine/threonine-protein kinase which positively regulates Ras-mediated signaling probably acting at the level of let-60/ras or/and lin-45/raf. Involved in sex myoblast migration. Plays a role in responses to M.nematophilum-mediated bacterial infection by promoting tail swelling and preventing constipation. Functions redundantly with ksr-2 in the Ras-mediated regulation of larval survival, the development of excretory canal and in mpk-1 phosphorylation in somatic cells. In addition, involved in determining vulval precursor cell fate during vulval induction independently of its kinase activity. Plays a role in egg-laying. In Caenorhabditis elegans, this protein is Kinase suppressor of Ras A.